Here is a 173-residue protein sequence, read N- to C-terminus: Ferric citrate uptake sigma factor FecI (173 aa).

The short motif at 40 to 52 (DIAQDTFLRVMVS) is the Polymerase core binding element. The H-T-H motif DNA-binding region spans 139–158 (YSEIAHKLGVSISSVKKYVA).

It belongs to the sigma-70 factor family. ECF subfamily. Interacts with FecR (via cytoplasmic N-terminus).

Functionally, sigma factors are initiation factors that promote the attachment of RNA polymerase to specific initiation sites and are then released. This sigma factor regulates transcriptional activation of the fecABCDE operon which mediates ferric citrate transport. The protein is Ferric citrate uptake sigma factor FecI (fecI) of Escherichia coli (strain K12).